A 622-amino-acid chain; its full sequence is DNA mismatch repair protein MutL (622 aa).

It belongs to the DNA mismatch repair MutL/HexB family.

In terms of biological role, this protein is involved in the repair of mismatches in DNA. It is required for dam-dependent methyl-directed DNA mismatch repair. May act as a 'molecular matchmaker', a protein that promotes the formation of a stable complex between two or more DNA-binding proteins in an ATP-dependent manner without itself being part of a final effector complex. This chain is DNA mismatch repair protein MutL, found in Actinobacillus pleuropneumoniae serotype 3 (strain JL03).